The following is a 235-amino-acid chain: Large ribosomal subunit protein uL1 (235 aa).

Belongs to the universal ribosomal protein uL1 family. In terms of assembly, part of the 50S ribosomal subunit.

In terms of biological role, binds directly to 23S rRNA. The L1 stalk is quite mobile in the ribosome, and is involved in E site tRNA release. Protein L1 is also a translational repressor protein, it controls the translation of the L11 operon by binding to its mRNA. In Prochlorococcus marinus (strain MIT 9215), this protein is Large ribosomal subunit protein uL1.